The primary structure comprises 109 residues: Nucleoid-associated protein HD_0326 (109 aa).

The protein belongs to the YbaB/EbfC family. As to quaternary structure, homodimer.

It localises to the cytoplasm. The protein localises to the nucleoid. Functionally, binds to DNA and alters its conformation. May be involved in regulation of gene expression, nucleoid organization and DNA protection. This chain is Nucleoid-associated protein HD_0326, found in Haemophilus ducreyi (strain 35000HP / ATCC 700724).